The chain runs to 119 residues: Protein TusC (119 aa).

It belongs to the DsrF/TusC family. As to quaternary structure, heterohexamer, formed by a dimer of trimers. The hexameric TusBCD complex contains 2 copies each of TusB, TusC and TusD. The TusBCD complex interacts with TusE.

Its subcellular location is the cytoplasm. Functionally, part of a sulfur-relay system required for 2-thiolation of 5-methylaminomethyl-2-thiouridine (mnm(5)s(2)U) at tRNA wobble positions. The sequence is that of Protein TusC from Buchnera aphidicola subsp. Baizongia pistaciae (strain Bp).